The following is a 286-amino-acid chain: ATP synthase gamma chain (286 aa).

Belongs to the ATPase gamma chain family. In terms of assembly, F-type ATPases have 2 components, CF(1) - the catalytic core - and CF(0) - the membrane proton channel. CF(1) has five subunits: alpha(3), beta(3), gamma(1), delta(1), epsilon(1). CF(0) has three main subunits: a, b and c.

The protein resides in the cell inner membrane. Its function is as follows. Produces ATP from ADP in the presence of a proton gradient across the membrane. The gamma chain is believed to be important in regulating ATPase activity and the flow of protons through the CF(0) complex. The protein is ATP synthase gamma chain of Pseudomonas fluorescens (strain Pf0-1).